We begin with the raw amino-acid sequence, 77 residues long: Dermatoxin-B1 (77 aa).

Residues 1-22 (MAFLKKSLFLVLFLGLVPLSLC) form the signal peptide. A propeptide spanning residues 23–42 (ESEKREGENEEEQEDDQSEE) is cleaved from the precursor. Residues 24–45 (SEKREGENEEEQEDDQSEEKRS) form a disordered region. Positions 30 to 40 (ENEEEQEDDQS) are enriched in acidic residues. Gln76 is subject to Glutamine amide.

This sequence belongs to the frog skin active peptide (FSAP) family. Dermatoxin subfamily. As to expression, highest expression in skin and to a lesser extent in brain and intestine.

The protein localises to the secreted. It localises to the target cell membrane. Possesses a potent antimicrobial activity against Gram-positive bacteria B.megaterium, C.glutamicum and S.aureus and mollicutes A.laidlawii and S.melliferum. Less active against Gram-negative bacteria B.cepacia, P.aeruginosa, S.typhimurium and S.meliloti. Probably acts by disturbing membrane functions with its amphipathic structure. This is Dermatoxin-B1 from Phyllomedusa bicolor (Two-colored leaf frog).